Reading from the N-terminus, the 352-residue chain is MFEKSTWIRLPRNVVVGHGVLDDAVEVVRDTHLTGRPLVVTSPTPKTVAAENVVAQFEAVGDDPAVVVVEEATFNSVERVLGEAEAVDPGYLVGVGGGKAIDIAKLASDHLNVGFVSVPTAASHDGIVSGRGSVPEGDTRHSVSAAPPLAVIADTGVIADAPWELTTAGCADIISNYTAVKDWRLANRLQHVPYSEYAGALSQMTAEMLVDNAANIKPELEESAWVVVKALVSSGVAMSIADSSRPASGSEHLFSHQLDRIAPGKALHGHQVGVGSILAEYLHSGQEGQWMAVRDALASLDAPTTADELGVADDEVLAALTSAHEIRDRYTILGGGISEVAAREAASRTGVI.

Residues 98–102 and 120–123 each bind NAD(+); these read GKAID and TAAS. D125 is a binding site for substrate. S129 is a binding site for NAD(+). Residue D172 coordinates substrate. The Zn(2+) site is built by D172 and H252. H256 is a binding site for substrate. H268 contacts Zn(2+).

It belongs to the glycerol-1-phosphate dehydrogenase family. Zn(2+) serves as cofactor.

Its subcellular location is the cytoplasm. It catalyses the reaction sn-glycerol 1-phosphate + NAD(+) = dihydroxyacetone phosphate + NADH + H(+). It carries out the reaction sn-glycerol 1-phosphate + NADP(+) = dihydroxyacetone phosphate + NADPH + H(+). The protein operates within membrane lipid metabolism; glycerophospholipid metabolism. Catalyzes the NAD(P)H-dependent reduction of dihydroxyacetonephosphate (DHAP or glycerone phosphate) to glycerol 1-phosphate (G1P). The G1P thus generated is used as the glycerophosphate backbone of phospholipids in the cellular membranes of Archaea. This Halobacterium salinarum (strain ATCC 29341 / DSM 671 / R1) protein is Glycerol-1-phosphate dehydrogenase [NAD(P)+].